The chain runs to 326 residues: Prenyl transferase nodC (326 aa).

A helical membrane pass occupies residues 8 to 28; that stretch reads LAAVLFSALFSLGVILVHLPW. Residue His-95 coordinates isopentenyl diphosphate. Residues Asp-102 and Asp-106 each contribute to the Mg(2+) site. Residue Arg-111 coordinates dimethylallyl diphosphate. N-linked (GlcNAc...) asparagine glycosylation is present at Asn-139. Lys-195 contacts dimethylallyl diphosphate. Asn-210 carries N-linked (GlcNAc...) asparagine glycosylation.

The protein belongs to the FPP/GGPP synthase family.

The protein localises to the membrane. It participates in secondary metabolite biosynthesis. Its function is as follows. Cytochrome P450 monooxygenase; part of the gene cluster that mediates the biosynthesis of the indole diterpenes nodulisporic acids (NA). Nodulisporic acid A (NAA) and its chemically modified derivatives are of particular significance because of their highly potent insecticidal activity against blood-feeding arthropods and lack of observable adverse effects on mammals, in particular the tremogenicity associated with the paspaline-derived IDTs is not observed. The geranylgeranyl diphosphate (GGPP) synthase ggs1, localized outside of the cluster, is proposed to catalyze the first step in nodulisporic acid biosynthesis via conversion of farnesyl pyrophosphate and isopentyl pyrophosphate into geranylgeranyl pyrophosphate (GGPP). Condensation of indole-3-glycerol phosphate with GGPP by the prenyl transferase nodC then forms 3-geranylgeranylindole (3-GGI). Epoxidation by the FAD-dependent monooxygenase nodM leads to a single-epoxidized-GGI that is substrate of the terpene cyclase nodB for cyclization to yield emindole SB. The terminal methyl carbon, C28, of emindole SB is then oxidized by the cytochrome P450 monooxygenase nodW to produce nodulisporic acid F (NAF), the pentacyclic core of NAA. NAF is converted to nodulisporic acid E (NAE) via prenylation. This step is probably performed by one of the indole diterpene prenyltransferases nodD1 or nodD2. Several oxidation steps performed by the FAD-linked oxidoreductase nodO and one of the cytochrome P450 monooxygenase nodR, nodX or nodZ further convert NAE to nodulisporic acid D (NAD). NAD is substrate of cytochrome P450 monooxygenase nodJ to produce the precursor of nodulisporic acid C (NAC), converted to NAC by one of the indole diterpene prenyltransferases nodD1 or nodD2. The FAD-dependent monooxygenase nodY2 then oxidizes NAC to nodulisporic acid B (NAB). Finally NAB is converted to NAA by one of the cytochrome P450 monooxygenases nodR, nodX or nodZ. The chain is Prenyl transferase nodC from Hypoxylon pulicicidum.